A 157-amino-acid polypeptide reads, in one-letter code: MTKTVFVLNGPNLNLLGKREPGIYGVATLDDIEASCKREAGQLELQIDFRQSNHEGDLVSWIQEAGEKNAYVLINPAAYSHTSVAIHDAIRSARVTVVEVHLSNIHAREAFRHHSHVSAVAKGVICGFGAEGYLLGLRALAAIAKEEENNGQSIKGA.

The active-site Proton acceptor is the tyrosine 24. Substrate contacts are provided by asparagine 75, histidine 81, and aspartate 88. Residue histidine 101 is the Proton donor of the active site. Substrate-binding positions include 102-103 (LS) and arginine 112.

The protein belongs to the type-II 3-dehydroquinase family. As to quaternary structure, homododecamer.

It carries out the reaction 3-dehydroquinate = 3-dehydroshikimate + H2O. The protein operates within metabolic intermediate biosynthesis; chorismate biosynthesis; chorismate from D-erythrose 4-phosphate and phosphoenolpyruvate: step 3/7. Catalyzes a trans-dehydration via an enolate intermediate. The protein is 3-dehydroquinate dehydratase of Brucella canis (strain ATCC 23365 / NCTC 10854 / RM-666).